Here is a 288-residue protein sequence, read N- to C-terminus: Acetyl-coenzyme A carboxylase carboxyl transferase subunit beta (288 aa).

The 256-residue stretch at 33-288 folds into the CoA carboxyltransferase N-terminal domain; it reads LFSQCPGCKH…LVRLHGGSPR (256 aa). Residues Cys-37, Cys-40, Cys-55, and Cys-58 each contribute to the Zn(2+) site. A C4-type zinc finger spans residues 37–58; it reads CPGCKHTIYQKDLGSERICPHC.

Belongs to the AccD/PCCB family. As to quaternary structure, acetyl-CoA carboxylase is a heterohexamer composed of biotin carboxyl carrier protein (AccB), biotin carboxylase (AccC) and two subunits each of ACCase subunit alpha (AccA) and ACCase subunit beta (AccD). Zn(2+) serves as cofactor.

Its subcellular location is the cytoplasm. It catalyses the reaction N(6)-carboxybiotinyl-L-lysyl-[protein] + acetyl-CoA = N(6)-biotinyl-L-lysyl-[protein] + malonyl-CoA. It functions in the pathway lipid metabolism; malonyl-CoA biosynthesis; malonyl-CoA from acetyl-CoA: step 1/1. Its function is as follows. Component of the acetyl coenzyme A carboxylase (ACC) complex. Biotin carboxylase (BC) catalyzes the carboxylation of biotin on its carrier protein (BCCP) and then the CO(2) group is transferred by the transcarboxylase to acetyl-CoA to form malonyl-CoA. In Streptococcus pneumoniae serotype 4 (strain ATCC BAA-334 / TIGR4), this protein is Acetyl-coenzyme A carboxylase carboxyl transferase subunit beta.